The following is a 136-amino-acid chain: MSSGGKSGGKAGDASSKAQSRSAKAGLQFPVGRIHRLLRKGNYAQRVGAGAPVYLAAVLEYLAAEILELAGNAARDNKKSRIIPRHLQLAIRNDEELNKLLGGVTISQGGVLPFIQSELLPAKSGKPKKAGGSQDI.

Over residues 1-11 (MSSGGKSGGKA) the composition is skewed to gly residues. The interval 1–24 (MSSGGKSGGKAGDASSKAQSRSAK) is disordered. N6-acetyllysine is present on residues K6 and K10. Low complexity predominate over residues 12–24 (GDASSKAQSRSAK). Position 108 is an N5-methylglutamine (Q108). S133 carries the phosphoserine modification. A [ST]-Q motif motif is present at residues 133-134 (SQ).

Belongs to the histone H2A family. As to quaternary structure, the nucleosome is a histone octamer containing two molecules each of H2A, H2B, H3 and H4 assembled in one H3-H4 heterotetramer and two H2A-H2B heterodimers. The octamer wraps approximately 147 bp of DNA. Post-translationally, phosphorylated to form H2AS128ph (gamma-H2A) in response to DNA double-strand breaks (DSBs) generated by exogenous genotoxic agents and by stalled replication forks. Phosphorylation is dependent on the DNA damage checkpoint kinases MEC1/ATR and TEL1/ATM, spreads on either side of a detected DSB site and may mark the surrounding chromatin for recruitment of proteins required for DNA damage signaling and repair. Gamma-H2A is removed from the DNA prior to the strand invasion-primer extension step of the repair process and subsequently dephosphorylated. Dephosphorylation is necessary for efficient recovery from the DNA damage checkpoint. Acetylated by ESA1 to form H2AK4ac and H2AK7ac.

The protein localises to the nucleus. It is found in the chromosome. Functionally, core component of nucleosome which plays a central role in DNA double strand break (DSB) repair. Nucleosomes wrap and compact DNA into chromatin, limiting DNA accessibility to the cellular machineries which require DNA as a template. Histones thereby play a central role in transcription regulation, DNA repair, DNA replication and chromosomal stability. DNA accessibility is regulated via a complex set of post-translational modifications of histones, also called histone code, and nucleosome remodeling. This chain is Histone H2A (HTA1), found in Mycosarcoma maydis (Corn smut fungus).